The chain runs to 379 residues: Sensor histidine kinase YhcY (379 aa).

Positions 185–373 (RLAQELHDSV…KLSIRLPLKS (189 aa)) constitute a Histidine kinase domain. His-191 carries the phosphohistidine; by autocatalysis modification.

The enzyme catalyses ATP + protein L-histidine = ADP + protein N-phospho-L-histidine.. In terms of biological role, member of the two-component regulatory system YhcY/YhcZ. Probably activates YhcZ by phosphorylation. This Bacillus subtilis (strain 168) protein is Sensor histidine kinase YhcY (yhcY).